The following is an 813-amino-acid chain: G-type lectin S-receptor-like serine/threonine-protein kinase LECRK1 (813 aa).

Positions 1–19 (MVALLLFPMLLQLLSPTCA) are cleaved as a signal peptide. The Extracellular segment spans residues 20–466 (QTQKNITLGS…NRKHWVLGSS (447 aa)). The Bulb-type lectin domain occupies 22-149 (QKNITLGSTL…DGTTKWQTFD (128 aa)). 6 N-linked (GlcNAc...) asparagine glycosylation sites follow: Asn24, Asn57, Asn164, Asn168, Asn219, and Asn242. An EGF-like; atypical domain is found at 293–346 (PQNICHAIVSDVGSGVCGFNSYCTFDGTRNQIASCQCPPWYKFFDEQKKYKGCK). 5 disulfides stabilise this stretch: Cys297/Cys315, Cys309/Cys327, Cys329/Cys345, Cys391/Cys413, and Cys395/Cys401. The PAN domain maps to 354–433 (CDLDEATALA…NMADYVQRTV (80 aa)). Residues Asn407 and Asn441 are each glycosylated (N-linked (GlcNAc...) asparagine). Residues 467-487 (LILGTSILVNFALISIFLFGT) form a helical membrane-spanning segment. Over 488–813 (YCRIATKKNI…DPCSFISSLP (326 aa)) the chain is Cytoplasmic. The Protein kinase domain maps to 523–797 (AGFHEILGAG…KVTQMLDGAV (275 aa)). ATP contacts are provided by residues 529–537 (LGAGASGVV) and Lys553. The active-site Proton acceptor is the Asp647.

This sequence belongs to the protein kinase superfamily. Ser/Thr protein kinase family.

It is found in the membrane. It carries out the reaction L-seryl-[protein] + ATP = O-phospho-L-seryl-[protein] + ADP + H(+). The catalysed reaction is L-threonyl-[protein] + ATP = O-phospho-L-threonyl-[protein] + ADP + H(+). In terms of biological role, involved in innate immunity. Required for the expression of defense-related genes PR1A, LOX2 and CHS1 upon biotic stresses. Required for basal resistance to the fungal blast (M.grisea), bacterial blight (X.oryzae pv. oryzae, Xoo) and the herbivorous insect brown planthopper (N.lugens, BPH). May be involved in several defense signaling pathways. Involved in the promotion of seed germination. Required for the expression of alpha-amylase genes during seed germination. Involved in resistance against the herbivorous insect brown planthopper (N.lugens, BPH). Member of the BPH3 (BPH resistance locus 3) cluster which contains LECRK1, LECRK2 and LECRK3. This chain is G-type lectin S-receptor-like serine/threonine-protein kinase LECRK1, found in Oryza sativa subsp. japonica (Rice).